Here is a 663-residue protein sequence, read N- to C-terminus: Endopolyphosphatase (663 aa).

At 1 to 14 (MAVNEKDVGRKSRV) the chain is on the cytoplasmic side. Residues 15–35 (SVVLWVFIALGTLFLCKNAFT) traverse the membrane as a helical; Signal-anchor for type II membrane protein segment. The Vacuolar segment spans residues 36 to 663 (FSSESIHGLK…ISTGYEDERN (628 aa)). 2 N-linked (GlcNAc...) asparagine glycosylation sites follow: asparagine 487 and asparagine 526. The interval 534-564 (SAEQNKKKKKKNGKPDKSIPRKKPDELPAGP) is disordered. The span at 546 to 559 (GKPDKSIPRKKPDE) shows a compositional bias: basic and acidic residues.

It belongs to the endopolyphosphatase PPN1 family. A divalent metal cation is required as a cofactor. In terms of processing, processing by proteases in the vacuole may be required for activation.

Its subcellular location is the vacuole membrane. The catalysed reaction is [phosphate](n+1) + n H2O = (n+1) phosphate + n H(+). Its function is as follows. Catalyzes the hydrolysis of inorganic polyphosphate (polyP) chains of many hundreds of phosphate residues into shorter lengths. The sequence is that of Endopolyphosphatase (PPN1) from Candida glabrata (strain ATCC 2001 / BCRC 20586 / JCM 3761 / NBRC 0622 / NRRL Y-65 / CBS 138) (Yeast).